Reading from the N-terminus, the 504-residue chain is Maturase K (504 aa).

Belongs to the intron maturase 2 family. MatK subfamily.

It is found in the plastid. It localises to the chloroplast. Usually encoded in the trnK tRNA gene intron. Probably assists in splicing its own and other chloroplast group II introns. The sequence is that of Maturase K from Hamamelis virginiana (Witch-hazel).